A 431-amino-acid chain; its full sequence is Glucose-1-phosphate adenylyltransferase (431 aa).

Beta-D-fructose 1,6-bisphosphate is bound at residue K39. Positions 40, 46, and 52 each coordinate AMP. Residues Y114, G179, 194–195 (EK), and S212 contribute to the alpha-D-glucose 1-phosphate site. AMP is bound by residues E370 and R386. Beta-D-fructose 1,6-bisphosphate contacts are provided by residues 419 to 423 (REMLR) and 429 to 431 (QER).

The protein belongs to the bacterial/plant glucose-1-phosphate adenylyltransferase family. Homotetramer.

It catalyses the reaction alpha-D-glucose 1-phosphate + ATP + H(+) = ADP-alpha-D-glucose + diphosphate. Its pathway is glycan biosynthesis; glycogen biosynthesis. With respect to regulation, allosterically activated by fructose-1,6-bisphosphate (F16BP) and inhibited by AMP. Its function is as follows. Involved in the biosynthesis of ADP-glucose, a building block required for the elongation reactions to produce glycogen. Catalyzes the reaction between ATP and alpha-D-glucose 1-phosphate (G1P) to produce pyrophosphate and ADP-Glc. The protein is Glucose-1-phosphate adenylyltransferase of Salmonella typhi.